The chain runs to 326 residues: Pancreas transcription factor 1 subunit alpha (326 aa).

One can recognise a bHLH domain in the interval 162–214; it reads QLRQAANVRERRRMQSINDAFEGLRSHIPTLPYEKRLSKVDTLRLAIGYINFL. Residues 229-240 show a composition bias toward gly residues; that stretch reads TGGCGGPGGSRH. Disordered stretches follow at residues 229-249 and 304-326; these read TGGCGGPGGSRHLGGDSPGNQ and DPRKLNSKSFDNIENEPPFEFVS.

As to quaternary structure, component of the pancreas transcription factor 1 complex (PTF1) which is composed of TCF3/p75, TCF12/p64 and PTF1A/p48. TCF3 is responsible for the nuclear import of the p48/p64 complex. Interacts with TCF3 and RBPSUH/RBP-Jkappa. Exocrine pancreas-specific. Expressed in azaserine-induced pancreatic tumors (at protein level). Expressed in AR42J cells but not in ARIP, DSL6A, or DSL6B cells. Down-regulation is associated with the change of an azaserine-induced acinar cell carcinoma to a ductal phenotype.

It is found in the nucleus. It localises to the cytoplasm. Its function is as follows. Transcription factor implicated in the cell fate determination in various organs. Binds to the E-box consensus sequence 5'-CANNTG-3'. Plays a role in early and late pancreas development and differentiation. Important for determining whether cells allocated to the pancreatic buds continue towards pancreatic organogenesis or revert back to duodenal fates. May be involved in the maintenance of exocrine pancreas-specific gene expression including ELA1 and amylase. Required for the formation of pancreatic acinar and ductal cells. Plays an important role in cerebellar development. Directly regulated by FOXN4 and RORC during retinal development, FOXN4-PTF1A pathway plays a central role in directing the differentiation of retinal progenitors towards horizontal and amacrine fates. The sequence is that of Pancreas transcription factor 1 subunit alpha (Ptf1a) from Rattus norvegicus (Rat).